The primary structure comprises 302 residues: Pyridoxal kinase (302 aa).

Positions 10, 45, and 122 each coordinate substrate. ATP contacts are provided by residues 181 to 182 and 215 to 227; these read TS and VGPK…TGTG. Asp-228 lines the substrate pocket.

It belongs to the pyridoxine kinase family. Homodimer. A divalent metal cation is required as a cofactor.

The protein resides in the cytoplasm. It carries out the reaction pyridoxal + ATP = pyridoxal 5'-phosphate + ADP + H(+). It functions in the pathway cofactor metabolism; pyridoxal 5'-phosphate salvage; pyridoxal 5'-phosphate from pyridoxal: step 1/1. Its function is as follows. Required for synthesis of pyridoxal-5-phosphate from vitamin B6. The protein is Pyridoxal kinase (pykA) of Dictyostelium discoideum (Social amoeba).